We begin with the raw amino-acid sequence, 21 residues long: Fibrinogen beta chain (21 aa).

Gln1 bears the Pyrrolidone carboxylic acid mark. Residues 1–11 (QHSTDYDEEEE) are compositionally biased toward acidic residues. Residues 1 to 21 (QHSTDYDEEEEDRAKLHLDAR) are disordered. Thr4 carries an O-linked (GalNAc...) threonine glycan. Position 6 is a sulfotyrosine (Tyr6). The segment covering 12-21 (DRAKLHLDAR) has biased composition (basic and acidic residues).

In terms of assembly, heterohexamer; disulfide linked. Contains 2 sets of 3 non-identical chains (alpha, beta and gamma). The 2 heterotrimers are in head to head conformation with the N-termini in a small central domain. In terms of processing, conversion of fibrinogen to fibrin is triggered by thrombin, which cleaves fibrinopeptides A and B from alpha and beta chains, and thus exposes the N-terminal polymerization sites responsible for the formation of the soft clot.

Its subcellular location is the secreted. In terms of biological role, cleaved by the protease thrombin to yield monomers which, together with fibrinogen alpha (FGA) and fibrinogen gamma (FGG), polymerize to form an insoluble fibrin matrix. Fibrin has a major function in hemostasis as one of the primary components of blood clots. In addition, functions during the early stages of wound repair to stabilize the lesion and guide cell migration during re-epithelialization. Was originally thought to be essential for platelet aggregation, based on in vitro studies using anticoagulated blood. However subsequent studies have shown that it is not absolutely required for thrombus formation in vivo. Enhances expression of SELP in activated platelets. Maternal fibrinogen is essential for successful pregnancy. Fibrin deposition is also associated with infection, where it protects against IFNG-mediated hemorrhage. May also facilitate the antibacterial immune response via both innate and T-cell mediated pathways. The sequence is that of Fibrinogen beta chain (FGB) from Cervus elaphus (Red deer).